The primary structure comprises 365 residues: Protein RecA (365 aa).

Position 69-76 (69-76 (GPESSGKT)) interacts with ATP. Residues 344 to 365 (LDDNPDTDDHDVEDIDENTDEE) form a disordered region. The segment covering 347-365 (NPDTDDHDVEDIDENTDEE) has biased composition (acidic residues).

It belongs to the RecA family.

It localises to the cytoplasm. Functionally, can catalyze the hydrolysis of ATP in the presence of single-stranded DNA, the ATP-dependent uptake of single-stranded DNA by duplex DNA, and the ATP-dependent hybridization of homologous single-stranded DNAs. It interacts with LexA causing its activation and leading to its autocatalytic cleavage. The chain is Protein RecA from Arthrospira platensis (Spirulina platensis).